Here is a 186-residue protein sequence, read N- to C-terminus: Adenylate kinase (186 aa).

12–17 serves as a coordination point for ATP; the sequence is GAGKGT. Residues 32–61 are NMP; it reads STGDLLRAEVNAQSPLGKEAALIMNKGELV. AMP is bound by residues threonine 33, arginine 38, 59 to 61, 86 to 89, and glutamine 93; these read ELV and GFPR. Residues 127 to 133 are LID; sequence SRGRSDD. Arginine 128 contributes to the ATP binding site. Positions 130 and 141 each coordinate AMP. Position 169 (glycine 169) interacts with ATP.

The protein belongs to the adenylate kinase family. Monomer.

The protein resides in the cytoplasm. It carries out the reaction AMP + ATP = 2 ADP. It participates in purine metabolism; AMP biosynthesis via salvage pathway; AMP from ADP: step 1/1. Its function is as follows. Catalyzes the reversible transfer of the terminal phosphate group between ATP and AMP. Plays an important role in cellular energy homeostasis and in adenine nucleotide metabolism. This is Adenylate kinase from Prochlorococcus marinus (strain MIT 9211).